The chain runs to 335 residues: Beta-ketoacyl-[acyl-carrier-protein] synthase III (335 aa).

Active-site residues include C116 and H256. The segment at 257 to 261 (QANLR) is ACP-binding. N286 is an active-site residue.

The protein belongs to the thiolase-like superfamily. FabH family. In terms of assembly, homodimer.

The protein localises to the cytoplasm. It catalyses the reaction malonyl-[ACP] + acetyl-CoA + H(+) = 3-oxobutanoyl-[ACP] + CO2 + CoA. The protein operates within lipid metabolism; fatty acid biosynthesis. Its function is as follows. Catalyzes the condensation reaction of fatty acid synthesis by the addition to an acyl acceptor of two carbons from malonyl-ACP. Catalyzes the first condensation reaction which initiates fatty acid synthesis and may therefore play a role in governing the total rate of fatty acid production. Possesses both acetoacetyl-ACP synthase and acetyl transacylase activities. Its substrate specificity determines the biosynthesis of branched-chain and/or straight-chain of fatty acids. The chain is Beta-ketoacyl-[acyl-carrier-protein] synthase III from Porphyromonas gingivalis (strain ATCC 33277 / DSM 20709 / CIP 103683 / JCM 12257 / NCTC 11834 / 2561).